We begin with the raw amino-acid sequence, 613 residues long: Dihydroxy-acid dehydratase (613 aa).

Aspartate 81 provides a ligand contact to Mg(2+). Cysteine 122 serves as a coordination point for [2Fe-2S] cluster. Positions 123 and 124 each coordinate Mg(2+). An N6-carboxylysine modification is found at lysine 124. Residue cysteine 195 coordinates [2Fe-2S] cluster. Glutamate 491 serves as a coordination point for Mg(2+). The active-site Proton acceptor is the serine 517.

It belongs to the IlvD/Edd family. In terms of assembly, homodimer. Requires [2Fe-2S] cluster as cofactor. Mg(2+) is required as a cofactor.

It carries out the reaction (2R)-2,3-dihydroxy-3-methylbutanoate = 3-methyl-2-oxobutanoate + H2O. The enzyme catalyses (2R,3R)-2,3-dihydroxy-3-methylpentanoate = (S)-3-methyl-2-oxopentanoate + H2O. It participates in amino-acid biosynthesis; L-isoleucine biosynthesis; L-isoleucine from 2-oxobutanoate: step 3/4. The protein operates within amino-acid biosynthesis; L-valine biosynthesis; L-valine from pyruvate: step 3/4. Functions in the biosynthesis of branched-chain amino acids. Catalyzes the dehydration of (2R,3R)-2,3-dihydroxy-3-methylpentanoate (2,3-dihydroxy-3-methylvalerate) into 2-oxo-3-methylpentanoate (2-oxo-3-methylvalerate) and of (2R)-2,3-dihydroxy-3-methylbutanoate (2,3-dihydroxyisovalerate) into 2-oxo-3-methylbutanoate (2-oxoisovalerate), the penultimate precursor to L-isoleucine and L-valine, respectively. This is Dihydroxy-acid dehydratase from Aeromonas hydrophila subsp. hydrophila (strain ATCC 7966 / DSM 30187 / BCRC 13018 / CCUG 14551 / JCM 1027 / KCTC 2358 / NCIMB 9240 / NCTC 8049).